We begin with the raw amino-acid sequence, 126 residues long: MATSNQMGANTRSKKKKKNLKKALLGCPQKRGVCMRLLTRSPKKPNSAQRRVAKVRLSTKRVIFAHIPGEGHNLSPFSVVLVRGGNVRDLPGVRYKTIRGVKDLAPVLSRTNGRSKYGTKRPKVHT.

A compositionally biased stretch (polar residues) spans 1-11; it reads MATSNQMGANT. The interval 1-21 is disordered; that stretch reads MATSNQMGANTRSKKKKKNLK. Basic residues predominate over residues 12–21; that stretch reads RSKKKKKNLK.

The protein belongs to the universal ribosomal protein uS12 family.

The protein localises to the mitochondrion. Its function is as follows. Protein S12 is involved in the translation initiation step. The polypeptide is Small ribosomal subunit protein uS12m (RPS12) (Bigelowiella natans (Pedinomonas minutissima)).